Consider the following 427-residue polypeptide: Glutamate-1-semialdehyde 2,1-aminomutase (427 aa).

An N6-(pyridoxal phosphate)lysine modification is found at K265.

This sequence belongs to the class-III pyridoxal-phosphate-dependent aminotransferase family. HemL subfamily. Homodimer. Pyridoxal 5'-phosphate is required as a cofactor.

Its subcellular location is the cytoplasm. The catalysed reaction is (S)-4-amino-5-oxopentanoate = 5-aminolevulinate. The protein operates within porphyrin-containing compound metabolism; protoporphyrin-IX biosynthesis; 5-aminolevulinate from L-glutamyl-tRNA(Glu): step 2/2. In Neisseria meningitidis serogroup A / serotype 4A (strain DSM 15465 / Z2491), this protein is Glutamate-1-semialdehyde 2,1-aminomutase.